The following is a 926-amino-acid chain: MRFRLNDSFSGKSWTIDNVQWTPQNLVAWIMELNIGLSDEAKLLLPNGMSLNETVLNSESDVVIYVLDQNLLTFTYDGDKIPSIPSLKGQPISNVLTGIIADSSSDQWKDKISKCLSLLSDILESSSKIHNQLSVCHDEYSTSIVSPEVAMNYLQRRQSGMKDLLFVFYERLDRVSVSDLLHDFLALPTGSLPITPLKILSTNWTKLDSWLNSISARYAEAQKRVQQCIGAANSIIVSPFKEVPSIKEGDDAYYHLRSVAQDAANILQEILKIESTSTTSQIKPKCNYETEITDCMEKLQSNLSELKSSRKSSLISLKSFWLSFYKVSLRYDALYEYLRQIAEELDRSKFVLSQSRNIFSLYIDILMEALRRTEWQESYNVSHDSSLPLDQEKELSLRKSWLSHFSNLLFNHGQLKYLPVLTRDEISNYLLNIQAHPNYQTFHQMLSNRLSEYLGFPGSPREAVSNTVQANNSLHEKLAMYQNRCNNLEAMLSHQNGFNYNINNDGLSPNAPHPPINEQSNSSQPFYRVSPSIVPLNVIRKLTNRKTSFTDSHILRLQDEVNQLRNELDLVNKRNEDLLIELQGKEEKIQYLETENEEVLQKYENLQEELSSTRKLLTKNEAAVAEQQSNEEMHSNEPNILNLYSVFEGKVDSLQELYNAFKLQLTSLKQKGEYATLAKDAEAVQHIIEERDYALAEKADLLKLSENRKEQCKILTQKLYTIVFRCNELQSVLRECVTQPGFDSDNERDGHASIPDRQIEFNSKDLQYLYWMDGEDADRNFQEFLNRMSSLDFDSFHNFVVSVLTQAHNHELRWKREFQSNRDKALKAILDSQSKVSLRNFKQGSLVLFLPTRRTAGNKKVWAAFNVNAPHYYLNTQPHLKLESRDWMLGRVTSIEDRTADDSTDKWLRLPSGTIWHLVEAIDERF.

Coiled-coil stretches lie at residues 461–496 (REAV…SHQN) and 548–671 (SFTD…LKQK). S548 is subject to Phosphoserine. The residue at position 550 (T550) is a Phosphothreonine. The residue at position 552 (S552) is a Phosphoserine.

This sequence belongs to the ATG11 family. Homodimer and potential homooligomers. Interacts with taz1.

It is found in the preautophagosomal structure membrane. Its subcellular location is the vacuole membrane. Its function is as follows. Involved in cytoplasm to vacuole transport (Cvt), pexophagy, mitophagy and nucleophagy. Recruits mitochondria for their selective degradation via autophagy (mitophagy) during starvation. Works as scaffold proteins that recruit ATG proteins to the preautophagosome (PAS), the site of vesicle/autophagosome formation. Required for atg9 anterograde transport from the mitochondria to the PAS. Required for nitrogen starvation-induced sexual development and for entering the dormant G0 state. This chain is Taz1-interacting factor 1 (taf1), found in Schizosaccharomyces pombe (strain 972 / ATCC 24843) (Fission yeast).